We begin with the raw amino-acid sequence, 669 residues long: Protein fem-1 homolog A (669 aa).

7 ANK repeats span residues 2 to 31, 40 to 70, 82 to 111, 115 to 145, 149 to 178, 182 to 211, and 214 to 243; these read DLRT…REEL, GGGT…SVEA, EGAP…SVNR, TNST…DLEV, HGHT…QVNR, KGNT…RMER, and YGMT…GQEQ. S108 carries the post-translational modification Phosphoserine. The disordered stretch occupies residues 240 to 278; that stretch reads GQEQVAGGEAQPGLPQEDPSTSQGCAQPQGAPCCSSSPE. TPR repeat units lie at residues 298 to 332 and 390 to 423; these read VEAL…RHQG and SYYI…QQSN. 2 ANK repeats span residues 534-576 and 580-609; these read NGFT…DPDS and DNNT…HMDA.

Belongs to the fem-1 family. In terms of assembly, component of a CRL2 E3 ubiquitin-protein ligase complex, also named ECS (Elongin BC-CUL2/5-SOCS-box protein) complex, composed of CUL2, Elongin BC (ELOB and ELOC), RBX1 and substrate-specific adapter FEM1A. Interacts with PTGER4. Interacts with NFKB1; the interaction is direct. Post-translationally, phosphorylated; highly phosphorylated in myoblasts and myotubes. Phosphorylation at Ser-108 promotes PGE2-EP4-mediated inhibition of inflammation. Dephosphorylated by protein phosphatase 2A (PP2A). Present in macrophages derived from peripheral blood monocytes. Also present in atheromata (at protein level).

The protein localises to the mitochondrion. It is found in the cytoplasm. Its pathway is protein modification; protein ubiquitination. Its function is as follows. Substrate-recognition component of a Cul2-RING (CRL2) E3 ubiquitin-protein ligase complex of the DesCEND (destruction via C-end degrons) pathway, which recognizes a C-degron located at the extreme C terminus of target proteins, leading to their ubiquitination and degradation. The C-degron recognized by the DesCEND pathway is usually a motif of less than ten residues and can be present in full-length proteins, truncated proteins or proteolytically cleaved forms. The CRL2(FEM1A) complex specifically recognizes proteins with an arginine at the C-terminus: recognizes and binds proteins ending with -Lys/Arg-Xaa-Arg and -Lys/Arg-Xaa-Xaa-Arg C-degrons, such as SIL1 or OR51B2, leading to their ubiquitination and degradation. Promotes ubiquitination and degradation of SLBP. Involved in PGE2-EP4-mediated inhibition of inflammation of macrophages via interaction with NFKB1 and PTGER4. Promotes inflammation in brain microglia through MAP2K4/MKK4-mediated signaling. The protein is Protein fem-1 homolog A of Homo sapiens (Human).